The sequence spans 122 residues: Large ribosomal subunit protein uL14c (122 aa).

Belongs to the universal ribosomal protein uL14 family. Part of the 50S ribosomal subunit.

The protein resides in the plastid. The protein localises to the chloroplast. In terms of biological role, binds to 23S rRNA. The sequence is that of Large ribosomal subunit protein uL14c from Arabis hirsuta (Hairy rock-cress).